The following is an 886-amino-acid chain: MKSHEIRQSFLDFFAQKGHTIVRSAPVIPADDPTLLFTNAGMNQFKDVFLDKGSRPYVRAADTQKCIRASGKHNDLEDVGRDTYHHTFFEMLGNWSFGDYYKLEAITWAWELFTVVWKLPKERLYATVYQDDDESFQIWKEQTDINPDHILRFGDKDNFWEMGETGPCGPCSEIHIDLTPDGSGKELVNVGDYRVIELWNLVFIQYNRQSDGHLEPLPKKHVDTGMGFERIVAVMQGKGSNYDSDVFQPLFDKITEITGVRYGASLDAPNDIAMRVIADHARTLTFALSDGAMPSNEGRGYVLRRILRRALRYSRNLGYHQPILHQLVGTLALAMGEVFPELVQRQEAVSAIIKAEEESFIVTLDRGIDLFSELVEKLRASNGKVIAGSDAFRLYDTYGFPFDLTRLMAADEGFEVDGEGFEHCMQEQKNRARSDRREKQRVDDDGAKWQWFSDVRASQFVGYDHLVHSATITGIRQGNGKLLLVLDATPFYAESGGQTGDNGWLENSRYRLHVADTVKDGDAIVHVVSDAFDKVQDSAVQPEDVEIVEQELAVAASVHRTARQDAERNHTATHLMHAALRRILGEHVQQKGSFVSPERLRFDFSHFSKLTDEEIEAVEIAVNTQIREAEPVVKHADVLFDDAVAKGALAFFGDKYADRVRVVEIPGMSVELCGGTHVDNIGRIGLFKIISEASVASGVRRIEAVTGKAAEKLLWQEYRELQQIRQLLKAKGDEAVVEKVAGLMDSKKELEKELAESRAAALVEQLTAALQAAPEVSGCRVLAIEVKNNDGETMRQATMALRDKAPCAVGLLATVEAGKVVLVSFATDEAVRTCSLDAGALIREAAKQVQGGGGGKAEFATAGGKQPENLSKALDAFTAAVRAKLG.

Residues His-570, His-574, Cys-673, and His-677 each coordinate Zn(2+).

Belongs to the class-II aminoacyl-tRNA synthetase family. It depends on Zn(2+) as a cofactor.

It is found in the cytoplasm. It carries out the reaction tRNA(Ala) + L-alanine + ATP = L-alanyl-tRNA(Ala) + AMP + diphosphate. Its function is as follows. Catalyzes the attachment of alanine to tRNA(Ala) in a two-step reaction: alanine is first activated by ATP to form Ala-AMP and then transferred to the acceptor end of tRNA(Ala). Also edits incorrectly charged Ser-tRNA(Ala) and Gly-tRNA(Ala) via its editing domain. The sequence is that of Alanine--tRNA ligase from Chlorobium chlorochromatii (strain CaD3).